The sequence spans 434 residues: UPF0597 protein CLD_2616 (434 aa).

The protein belongs to the UPF0597 family.

The chain is UPF0597 protein CLD_2616 from Clostridium botulinum (strain Okra / Type B1).